Here is a 391-residue protein sequence, read N- to C-terminus: ATP phosphoribosyltransferase regulatory subunit (391 aa).

This sequence belongs to the class-II aminoacyl-tRNA synthetase family. HisZ subfamily. In terms of assembly, heteromultimer composed of HisG and HisZ subunits.

Its subcellular location is the cytoplasm. It participates in amino-acid biosynthesis; L-histidine biosynthesis; L-histidine from 5-phospho-alpha-D-ribose 1-diphosphate: step 1/9. In terms of biological role, required for the first step of histidine biosynthesis. May allow the feedback regulation of ATP phosphoribosyltransferase activity by histidine. This Prochlorococcus marinus (strain SARG / CCMP1375 / SS120) protein is ATP phosphoribosyltransferase regulatory subunit.